The primary structure comprises 378 residues: 2-aminoethylphosphonate--pyruvate transaminase 1 (378 aa).

K194 carries the post-translational modification N6-(pyridoxal phosphate)lysine.

It belongs to the class-V pyridoxal-phosphate-dependent aminotransferase family. PhnW subfamily. In terms of assembly, homodimer. It depends on pyridoxal 5'-phosphate as a cofactor.

The enzyme catalyses (2-aminoethyl)phosphonate + pyruvate = phosphonoacetaldehyde + L-alanine. Involved in phosphonate degradation. The polypeptide is 2-aminoethylphosphonate--pyruvate transaminase 1 (Cupriavidus pinatubonensis (strain JMP 134 / LMG 1197) (Cupriavidus necator (strain JMP 134))).